The sequence spans 350 residues: 3-dehydroquinate synthase (350 aa).

NAD(+) is bound by residues 106-110 (GVVGD), 130-131 (TS), Lys143, and Lys152. Residues Glu185, His246, and His263 each contribute to the Zn(2+) site.

It belongs to the sugar phosphate cyclases superfamily. Dehydroquinate synthase family. It depends on Co(2+) as a cofactor. Zn(2+) serves as cofactor. NAD(+) is required as a cofactor.

It localises to the cytoplasm. It catalyses the reaction 7-phospho-2-dehydro-3-deoxy-D-arabino-heptonate = 3-dehydroquinate + phosphate. It functions in the pathway metabolic intermediate biosynthesis; chorismate biosynthesis; chorismate from D-erythrose 4-phosphate and phosphoenolpyruvate: step 2/7. In terms of biological role, catalyzes the conversion of 3-deoxy-D-arabino-heptulosonate 7-phosphate (DAHP) to dehydroquinate (DHQ). This is 3-dehydroquinate synthase from Clostridium perfringens (strain SM101 / Type A).